The sequence spans 234 residues: Ribonuclease HII (234 aa).

Positions 30–221 constitute an RNase H type-2 domain; the sequence is GPVAGVDEAG…VRNAAMGSSL (192 aa). A divalent metal cation-binding residues include D36, E37, and D130.

This sequence belongs to the RNase HII family. Mn(2+) is required as a cofactor. Mg(2+) serves as cofactor.

It is found in the cytoplasm. It carries out the reaction Endonucleolytic cleavage to 5'-phosphomonoester.. In terms of biological role, endonuclease that specifically degrades the RNA of RNA-DNA hybrids. This is Ribonuclease HII from Mycobacteroides abscessus (strain ATCC 19977 / DSM 44196 / CCUG 20993 / CIP 104536 / JCM 13569 / NCTC 13031 / TMC 1543 / L948) (Mycobacterium abscessus).